We begin with the raw amino-acid sequence, 477 residues long: Glutamate--tRNA ligase (477 aa).

The 'HIGH' region signature appears at 8–18 (PSPTGTLHIGT). The 'KMSKS' region signature appears at 247–251 (KLSKR). Lys250 serves as a coordination point for ATP.

The protein belongs to the class-I aminoacyl-tRNA synthetase family. Glutamate--tRNA ligase type 1 subfamily. As to quaternary structure, monomer.

It is found in the cytoplasm. The catalysed reaction is tRNA(Glu) + L-glutamate + ATP = L-glutamyl-tRNA(Glu) + AMP + diphosphate. Catalyzes the attachment of glutamate to tRNA(Glu) in a two-step reaction: glutamate is first activated by ATP to form Glu-AMP and then transferred to the acceptor end of tRNA(Glu). This chain is Glutamate--tRNA ligase, found in Synechococcus sp. (strain CC9605).